Reading from the N-terminus, the 301-residue chain is Small ribosomal subunit protein uS2 (301 aa).

The protein belongs to the universal ribosomal protein uS2 family. Component of the small ribosomal subunit. Mature ribosomes consist of a small (40S) and a large (60S) subunit. The 40S subunit contains about 33 different proteins and 1 molecule of RNA (18S). The 60S subunit contains about 49 different proteins and 3 molecules of RNA (25S, 5.8S and 5S). Interacts with RPS21.

It is found in the cytoplasm. In terms of biological role, required for the assembly and/or stability of the 40S ribosomal subunit. Required for the processing of the 20S rRNA-precursor to mature 18S rRNA in a late step of the maturation of 40S ribosomal subunits. The sequence is that of Small ribosomal subunit protein uS2 from Ajellomyces dermatitidis (strain ER-3 / ATCC MYA-2586) (Blastomyces dermatitidis).